The following is a 104-amino-acid chain: Large ribosomal subunit protein uL24 (104 aa).

Belongs to the universal ribosomal protein uL24 family. Part of the 50S ribosomal subunit.

Its function is as follows. One of two assembly initiator proteins, it binds directly to the 5'-end of the 23S rRNA, where it nucleates assembly of the 50S subunit. One of the proteins that surrounds the polypeptide exit tunnel on the outside of the subunit. The chain is Large ribosomal subunit protein uL24 from Methylorubrum extorquens (strain PA1) (Methylobacterium extorquens).